A 376-amino-acid polypeptide reads, in one-letter code: Protein STRICTOSIDINE SYNTHASE-LIKE 8 (376 aa).

The signal sequence occupies residues 1-31; it reads MPISRRVLTPITAAPVILAVLCFFFWSSIIG. N-linked (GlcNAc...) asparagine glycosylation is found at Asn98, Asn172, and Asn224.

The protein belongs to the strictosidine synthase family.

It localises to the vacuole. The polypeptide is Protein STRICTOSIDINE SYNTHASE-LIKE 8 (Arabidopsis thaliana (Mouse-ear cress)).